The primary structure comprises 364 residues: Chorismate synthase (364 aa).

Residue arginine 48 coordinates NADP(+). Residues 131-133, 243-244, glycine 288, 303-307, and arginine 329 each bind FMN; these read RAS, NA, and KPTSS.

It belongs to the chorismate synthase family. Homotetramer. It depends on FMNH2 as a cofactor.

It carries out the reaction 5-O-(1-carboxyvinyl)-3-phosphoshikimate = chorismate + phosphate. Its pathway is metabolic intermediate biosynthesis; chorismate biosynthesis; chorismate from D-erythrose 4-phosphate and phosphoenolpyruvate: step 7/7. Functionally, catalyzes the anti-1,4-elimination of the C-3 phosphate and the C-6 proR hydrogen from 5-enolpyruvylshikimate-3-phosphate (EPSP) to yield chorismate, which is the branch point compound that serves as the starting substrate for the three terminal pathways of aromatic amino acid biosynthesis. This reaction introduces a second double bond into the aromatic ring system. The polypeptide is Chorismate synthase (Bartonella bacilliformis (strain ATCC 35685 / KC583 / Herrer 020/F12,63)).